A 1307-amino-acid chain; its full sequence is Histone-lysine N-methyltransferase SETDB1 (1307 aa).

Residues 30 to 65 adopt a coiled-coil conformation; it reads VEELGISMEELRQYIDEELEKMDCIQQRKKQLAELE. Phosphoserine occurs at positions 112 and 117. Threonine 120 is subject to Phosphothreonine. Residues 127-148 are disordered; the sequence is DEDDDVLSIDSGDAGSRTPKDQ. Lysine 182 participates in a covalent cross-link: Glycyl lysine isopeptide (Lys-Gly) (interchain with G-Cter in SUMO2); alternate. Residue lysine 182 forms a Glycyl lysine isopeptide (Lys-Gly) (interchain with G-Cter in ubiquitin); alternate linkage. Tudor domains follow at residues 257–320 and 347–403; these read KLFV…LKKT and LLKS…SMKT. 3 disordered regions span residues 404-424, 444-512, and 531-570; these read SSAS…PNMG, IQFK…TLSE, and SVTS…AFHG. Positions 454-467 are enriched in pro residues; the sequence is PIAPPAPLPIPPLS. Residues 476-494 show a composition bias toward polar residues; sequence ESQLAQSRKQVAKKSTSFR. Over residues 495–512 the composition is skewed to low complexity; that stretch reads PGSVGSGHSSPTSSTLSE. The segment covering 539–565 has biased composition (pro residues); it reads AAPPVPPVPPGPPTPPGPPAPPGPLAP. Positions 611 to 682 constitute an MBD domain; that stretch reads YRGKNPLLVP…EMFCLDPYVL (72 aa). One can recognise a Pre-SET domain in the interval 744-817; sequence VGCDCKDGCR…MCTNRLVQHG (74 aa). Residues cysteine 746, cysteine 748, cysteine 752, cysteine 758, cysteine 760, cysteine 798, cysteine 802, cysteine 804, and cysteine 809 each coordinate Zn(2+). The 463-residue stretch at 820–1282 folds into the SET domain; it reads VRLQLFKTQN…AGTELTWDYN (463 aa). Residues 830 to 832, aspartate 868, and tyrosine 870 each bind S-adenosyl-L-methionine; that span reads KGW. Lysine 884 is covalently cross-linked (Glycyl lysine isopeptide (Lys-Gly) (interchain with G-Cter in ubiquitin)). Residues 885–1174 are disordered; that stretch reads EGYESDVPTS…KNLSGPTKRQ (290 aa). Over residues 913–924 the composition is skewed to acidic residues; the sequence is EDPEESNDDSSD. Basic and acidic residues predominate over residues 950–966; the sequence is GQKENELSEMTSKDSRP. Serine 1042 carries the post-translational modification Phosphoserine. Basic and acidic residues predominate over residues 1048 to 1066; that stretch reads FKDEGDNKQPKKEDPENRN. A Glycyl lysine isopeptide (Lys-Gly) (interchain with G-Cter in SUMO2); alternate cross-link involves residue lysine 1049. Residue lysine 1049 forms a Glycyl lysine isopeptide (Lys-Gly) (interchain with G-Cter in SUMO1); alternate linkage. Residues lysine 1055 and lysine 1085 each participate in a glycyl lysine isopeptide (Lys-Gly) (interchain with G-Cter in SUMO2) cross-link. Over residues 1097 to 1112 the composition is skewed to polar residues; that stretch reads SVLQSQRVVTSTQSNP. Residues 1116 to 1131 show a composition bias toward low complexity; it reads LTLSSSTESEGESGTS. Positions 1137-1156 are enriched in polar residues; it reads GHTSATAVDSDDIQTISSGS. Residue lysine 1165 forms a Glycyl lysine isopeptide (Lys-Gly) (interchain with G-Cter in SUMO2) linkage. Lysine 1186 and lysine 1194 each carry N6,N6,N6-trimethyllysine; alternate. N6,N6-dimethyllysine; alternate occurs at positions 1186 and 1194. S-adenosyl-L-methionine contacts are provided by residues arginine 1236 and 1239-1240; that span reads NH. Zn(2+) contacts are provided by cysteine 1242, cysteine 1295, cysteine 1297, and cysteine 1302. Positions 1291–1307 constitute a Post-SET domain; sequence KELLCCCGAIECRGRLL.

Belongs to the class V-like SAM-binding methyltransferase superfamily. Histone-lysine methyltransferase family. Suvar3-9 subfamily. Part of a complex containing at least CDYL, REST, WIZ, SETDB1, EHMT1 and EHMT2. Forms a complex with ATRX, TRIM28 and ZNF274. Probably part of a corepressor complex containing ZNF304, TRIM28, SETDB1 and DNMT1. Interacts with TRIM28/TIF1B. Interacts with ATF7IP and ATF7IP2; the interaction with ATF7IP is required to stimulate histone methyltransferase activity and facilitate the conversion of dimethylated to trimethylated H3 'Lys-9'. Interacts with MBD1; interaction is abolished when MBD1 is sumoylated. Interacts with CBX1 and CBX5. Interacts with DNMT3A and DNMT3B. Interacts with SUMO2. Interacts with MPHOSPH8. Interacts with ERG. Interacts with HDAC1, HDAC2, SIN3A, SIN3B. Interacts with ATRX. Interacts with RESF1. Interacts with ZNF638. Interacts with TASOR. Interacts with ZNF263; recruited to the SIX3 promoter along with other proteins involved in chromatin modification and transcriptional corepression where it contributes to transcriptional repression. Interacts with PHF13; the interaction probably enhances SETDB1 chromatin-associated levels and activity. Interacts with VRK1. Degraded by the proteasome, shielded by interaction with ATF7IP. In terms of processing, monoubiquitinated at Lys-884 by E2 enzymes UBE2E family. The conjugated-Ub is protected from deubiquitination through the SET domain. Monoubiquitination at Lys-884 is required for catalytic activity and H3K9 methylation and endogenous retrovirus silencing. As to expression, ubiquitously expressed. Strong expression in liver and testis. Expressed in the brain, lungs, kidneys, uterus and seminal vesicles.

The protein resides in the nucleus. It is found in the chromosome. The enzyme catalyses N(6),N(6)-dimethyl-L-lysyl(9)-[histone H3] + S-adenosyl-L-methionine = N(6),N(6),N(6)-trimethyl-L-lysyl(9)-[histone H3] + S-adenosyl-L-homocysteine + H(+). In terms of biological role, histone methyltransferase that specifically trimethylates 'Lys-9' of histone H3. H3 'Lys-9' trimethylation represents a specific tag for epigenetic transcriptional repression by recruiting HP1 (CBX1, CBX3 and/or CBX5) proteins to methylated histones. Mainly functions in euchromatin regions, thereby playing a central role in the silencing of euchromatic genes. H3 'Lys-9' trimethylation is coordinated with DNA methylation. Probably forms a complex with MBD1 and ATF7IP that represses transcription and couples DNA methylation and histone 'Lys-9' trimethylation. Its activity is dependent on MBD1 and is heritably maintained through DNA replication by being recruited by CAF-1. SETDB1 is targeted to histone H3 by TRIM28/TIF1B, a factor recruited by KRAB zinc-finger proteins. Probably forms a corepressor complex required for activated KRAS-mediated promoter hypermethylation and transcriptional silencing of tumor suppressor genes (TSGs) or other tumor-related genes in colorectal cancer (CRC) cells. Required to maintain a transcriptionally repressive state of genes in undifferentiated embryonic stem cells (ESCs). In ESCs, in collaboration with TRIM28, is also required for H3K9me3 and silencing of endogenous and introduced retroviruses in a DNA-methylation independent-pathway. Associates at promoter regions of tumor suppressor genes (TSGs) leading to their gene silencing. The SETDB1-TRIM28-ZNF274 complex may play a role in recruiting ATRX to the 3'-exons of zinc-finger coding genes with atypical chromatin signatures to establish or maintain/protect H3K9me3 at these transcriptionally active regions. The polypeptide is Histone-lysine N-methyltransferase SETDB1 (Mus musculus (Mouse)).